A 344-amino-acid polypeptide reads, in one-letter code: Lipase chaperone (344 aa).

Residues 14-34 traverse the membrane as a helical segment; the sequence is VAVYGAVGLAAIAGVAIWSGA. Residues 45 to 57 are compositionally biased toward low complexity; the sequence is LSADAAARDGASA. The segment at 45-78 is disordered; sequence LSADAAARDGASAAPPPPARPASAGMPSPLAGSS.

It belongs to the lipase chaperone family.

Its subcellular location is the cell inner membrane. In terms of biological role, may be involved in the folding of the extracellular lipase during its passage through the periplasm. This Burkholderia ambifaria (strain ATCC BAA-244 / DSM 16087 / CCUG 44356 / LMG 19182 / AMMD) (Burkholderia cepacia (strain AMMD)) protein is Lipase chaperone.